A 179-amino-acid polypeptide reads, in one-letter code: Ribulose bisphosphate carboxylase small subunit, chloroplastic 2 (179 aa).

A chloroplast-targeting transit peptide spans 1 to 58 (MASSATMLSSVATAACVAPAQASMVAPFVGLKSASAFPVTQKTVTGLSTLPSNGGRVQ).

This sequence belongs to the RuBisCO small chain family. As to quaternary structure, heterohexadecamer of 8 large and 8 small subunits.

Its subcellular location is the plastid. The protein localises to the chloroplast. RuBisCO catalyzes two reactions: the carboxylation of D-ribulose 1,5-bisphosphate, the primary event in carbon dioxide fixation, as well as the oxidative fragmentation of the pentose substrate. Both reactions occur simultaneously and in competition at the same active site. Although the small subunit is not catalytic it is essential for maximal activity. The sequence is that of Ribulose bisphosphate carboxylase small subunit, chloroplastic 2 from Fritillaria agrestis (Stinkbells).